We begin with the raw amino-acid sequence, 256 residues long: MPRYRLLVEYDGTPFNGWQRQDKGLSVQGILEKAVEKLCGVPCTLHAAGRTDAGVHATGQVAHVDLPRDYPADTVRDALNYHMKPKPVAVVAAELVDEDFHARFSAVGRAYLYRIVNRRAPLALDQHRAWWVPVALDAEAMAEGARRLLGHHDFSTFRASECQAKSPMKTLDVLDVTRVGEEIRIVAEARSFLHHQVRNMVGTLKLVGEGKWSPDDMAKVLEARDRTKGGPTAPAAGLVLTGVSYSASGGKSGPTG.

D52 acts as the Nucleophile in catalysis. Y111 lines the substrate pocket.

This sequence belongs to the tRNA pseudouridine synthase TruA family. As to quaternary structure, homodimer.

It catalyses the reaction uridine(38/39/40) in tRNA = pseudouridine(38/39/40) in tRNA. Formation of pseudouridine at positions 38, 39 and 40 in the anticodon stem and loop of transfer RNAs. This Paramagnetospirillum magneticum (strain ATCC 700264 / AMB-1) (Magnetospirillum magneticum) protein is tRNA pseudouridine synthase A.